The chain runs to 178 residues: Translation initiation factor IF-3 (178 aa).

This sequence belongs to the IF-3 family. Monomer.

Its subcellular location is the cytoplasm. Its function is as follows. IF-3 binds to the 30S ribosomal subunit and shifts the equilibrium between 70S ribosomes and their 50S and 30S subunits in favor of the free subunits, thus enhancing the availability of 30S subunits on which protein synthesis initiation begins. This Nautilia profundicola (strain ATCC BAA-1463 / DSM 18972 / AmH) protein is Translation initiation factor IF-3.